The chain runs to 136 residues: Secreted RxLR effector protein 10 (136 aa).

Residues 1 to 22 (MRVLNFVLTTTVVLLTSSEGIA) form the signal peptide. The RxLR-dEER signature appears at 42–56 (RSLRATENPGSDESR). The interval 42-78 (RSLRATENPGSDESRLNEKDTGFDPDGSSSKEDEDIG) is disordered. The segment covering 53 to 63 (DESRLNEKDTG) has biased composition (basic and acidic residues).

It belongs to the RxLR effector family.

It is found in the secreted. It localises to the host cytoplasm. Its subcellular location is the host nucleus. Effector that acts as a broad suppressor of cell death to interrupt plant immunity. Inhibits cell death induced by cell death-inducing proteins, including the PAMP elicitor INF1 from P.infestans. The protein is Secreted RxLR effector protein 10 of Plasmopara viticola (Downy mildew of grapevine).